The chain runs to 542 residues: Chaperonin GroEL (542 aa).

Residues 29 to 32, 86 to 90, Gly-413, 476 to 478, and Asp-492 contribute to the ATP site; these read TLGP, DGTTT, and NAA. The tract at residues 523-542 is disordered; it reads EPAAPAMPGGMDPSMMGGMM. Over residues 526–542 the composition is skewed to low complexity; that stretch reads APAMPGGMDPSMMGGMM.

This sequence belongs to the chaperonin (HSP60) family. In terms of assembly, forms a cylinder of 14 subunits composed of two heptameric rings stacked back-to-back. Interacts with the co-chaperonin GroES.

Its subcellular location is the cytoplasm. It carries out the reaction ATP + H2O + a folded polypeptide = ADP + phosphate + an unfolded polypeptide.. Together with its co-chaperonin GroES, plays an essential role in assisting protein folding. The GroEL-GroES system forms a nano-cage that allows encapsulation of the non-native substrate proteins and provides a physical environment optimized to promote and accelerate protein folding. This is Chaperonin GroEL from Streptococcus uberis (strain ATCC BAA-854 / 0140J).